Consider the following 131-residue polypeptide: Protein ApaG (131 aa).

The 125-residue stretch at 3 to 127 (RAVTRQIEVT…FSLDSPDGGK (125 aa)) folds into the ApaG domain.

This chain is Protein ApaG, found in Bradyrhizobium sp. (strain BTAi1 / ATCC BAA-1182).